Reading from the N-terminus, the 82-residue chain is MRIMAKIGVENSLTDVQQALKQQGHEVVTLNSEQDAQGCDCCVVTGQDSNMMGIADASIKGSVITAHGLTTDEVCQQVESRT.

Belongs to the UPF0180 family.

The polypeptide is UPF0180 protein BT9727_1277 (Bacillus thuringiensis subsp. konkukian (strain 97-27)).